A 365-amino-acid chain; its full sequence is UDP-N-acetylglucosamine--N-acetylmuramyl-(pentapeptide) pyrophosphoryl-undecaprenol N-acetylglucosamine transferase (365 aa).

UDP-N-acetyl-alpha-D-glucosamine-binding positions include 17–19 (TGG), N129, R167, S194, I250, 269–274 (ALTVSE), and Q295.

It belongs to the glycosyltransferase 28 family. MurG subfamily.

The protein localises to the cell inner membrane. The enzyme catalyses di-trans,octa-cis-undecaprenyl diphospho-N-acetyl-alpha-D-muramoyl-L-alanyl-D-glutamyl-meso-2,6-diaminopimeloyl-D-alanyl-D-alanine + UDP-N-acetyl-alpha-D-glucosamine = di-trans,octa-cis-undecaprenyl diphospho-[N-acetyl-alpha-D-glucosaminyl-(1-&gt;4)]-N-acetyl-alpha-D-muramoyl-L-alanyl-D-glutamyl-meso-2,6-diaminopimeloyl-D-alanyl-D-alanine + UDP + H(+). The protein operates within cell wall biogenesis; peptidoglycan biosynthesis. Its function is as follows. Cell wall formation. Catalyzes the transfer of a GlcNAc subunit on undecaprenyl-pyrophosphoryl-MurNAc-pentapeptide (lipid intermediate I) to form undecaprenyl-pyrophosphoryl-MurNAc-(pentapeptide)GlcNAc (lipid intermediate II). The chain is UDP-N-acetylglucosamine--N-acetylmuramyl-(pentapeptide) pyrophosphoryl-undecaprenol N-acetylglucosamine transferase from Shewanella pealeana (strain ATCC 700345 / ANG-SQ1).